The primary structure comprises 156 residues: ATP synthase subunit b (156 aa).

The chain crosses the membrane as a helical span at residues L7–L29.

The protein belongs to the ATPase B chain family. As to quaternary structure, F-type ATPases have 2 components, F(1) - the catalytic core - and F(0) - the membrane proton channel. F(1) has five subunits: alpha(3), beta(3), gamma(1), delta(1), epsilon(1). F(0) has three main subunits: a(1), b(2) and c(10-14). The alpha and beta chains form an alternating ring which encloses part of the gamma chain. F(1) is attached to F(0) by a central stalk formed by the gamma and epsilon chains, while a peripheral stalk is formed by the delta and b chains.

Its subcellular location is the cell inner membrane. Its function is as follows. F(1)F(0) ATP synthase produces ATP from ADP in the presence of a proton or sodium gradient. F-type ATPases consist of two structural domains, F(1) containing the extramembraneous catalytic core and F(0) containing the membrane proton channel, linked together by a central stalk and a peripheral stalk. During catalysis, ATP synthesis in the catalytic domain of F(1) is coupled via a rotary mechanism of the central stalk subunits to proton translocation. Component of the F(0) channel, it forms part of the peripheral stalk, linking F(1) to F(0). This chain is ATP synthase subunit b, found in Photobacterium profundum (strain SS9).